The chain runs to 313 residues: Ribosomal RNA small subunit methyltransferase H (313 aa).

S-adenosyl-L-methionine contacts are provided by residues 33 to 35 (AGH), Asp53, Phe82, Asp103, and Gln110.

This sequence belongs to the methyltransferase superfamily. RsmH family.

It is found in the cytoplasm. The enzyme catalyses cytidine(1402) in 16S rRNA + S-adenosyl-L-methionine = N(4)-methylcytidine(1402) in 16S rRNA + S-adenosyl-L-homocysteine + H(+). In terms of biological role, specifically methylates the N4 position of cytidine in position 1402 (C1402) of 16S rRNA. The polypeptide is Ribosomal RNA small subunit methyltransferase H (Acetivibrio thermocellus (strain ATCC 27405 / DSM 1237 / JCM 9322 / NBRC 103400 / NCIMB 10682 / NRRL B-4536 / VPI 7372) (Clostridium thermocellum)).